The following is a 510-amino-acid chain: Probable malate:quinone oxidoreductase (510 aa).

This sequence belongs to the MQO family. FAD serves as cofactor.

The catalysed reaction is (S)-malate + a quinone = a quinol + oxaloacetate. The protein operates within carbohydrate metabolism; tricarboxylic acid cycle; oxaloacetate from (S)-malate (quinone route): step 1/1. This Wigglesworthia glossinidia brevipalpis protein is Probable malate:quinone oxidoreductase.